The following is a 473-amino-acid chain: Pre-mRNA-splicing factor prp5 (473 aa).

WD repeat units follow at residues glycine 161 to aspartate 191, glycine 203 to aspartate 233, glycine 245 to aspartate 275, glycine 287 to aspartate 317, histidine 329 to lysine 358, glycine 370 to aspartate 399, and aspartate 419 to lysine 449.

This sequence belongs to the WD repeat PRL1/PRL2 family. In terms of assembly, belongs to the 40S cdc5-associated complex (or cwf complex), a spliceosome sub-complex reminiscent of a late-stage spliceosome composed of the U2, U5 and U6 snRNAs and at least brr2, cdc5, cwf2/prp3, cwf3/syf1, cwf4/syf3, cwf5/ecm2, spp42/cwf6, cwf7/spf27, cwf8, cwf9, cwf10, cwf11, cwf12, prp45/cwf13, cwf14, cwf15, cwf16, cwf17, cwf18, cwf19, cwf20, cwf21, cwf22, cwf23, cwf24, cwf25, cwf26, cyp7/cwf27, cwf28, cwf29/ist3, lea1, msl1, prp5/cwf1, prp10, prp12/sap130, prp17, prp22, sap61, sap62, sap114, sap145, slu7, smb1, smd1, smd3, smf1, smg1 and syf2.

Its subcellular location is the nucleus. Functionally, required for both cell cycle progression at G2/M and pre-mRNA splicing. Interacts genetically with the PRP4 kinase. The protein is Pre-mRNA-splicing factor prp5 (prp5) of Schizosaccharomyces pombe (strain 972 / ATCC 24843) (Fission yeast).